We begin with the raw amino-acid sequence, 496 residues long: Glutamyl-tRNA(Gln) amidotransferase subunit A (496 aa).

Catalysis depends on charge relay system residues K75 and S150. S174 acts as the Acyl-ester intermediate in catalysis.

Belongs to the amidase family. GatA subfamily. In terms of assembly, heterotrimer of A, B and C subunits.

The enzyme catalyses L-glutamyl-tRNA(Gln) + L-glutamine + ATP + H2O = L-glutaminyl-tRNA(Gln) + L-glutamate + ADP + phosphate + H(+). Its function is as follows. Allows the formation of correctly charged Gln-tRNA(Gln) through the transamidation of misacylated Glu-tRNA(Gln) in organisms which lack glutaminyl-tRNA synthetase. The reaction takes place in the presence of glutamine and ATP through an activated gamma-phospho-Glu-tRNA(Gln). This chain is Glutamyl-tRNA(Gln) amidotransferase subunit A, found in Burkholderia pseudomallei (strain 668).